Consider the following 107-residue polypeptide: Monogrin 2 (107 aa).

The signal sequence occupies residues 1–20 (MEGKVLLCFALLLPFTVAQA). 3 disulfide bridges follow: Cys28–Cys82, Cys36–Cys62, and Cys55–Cys78. The BPTI/Kunitz inhibitor domain occupies 29-82 (GYLMMQRCRGDTTETKAWGFNYEEKKCQKETVICGTGGAPRNAFETKKDCDALC). The Cell attachment site signature appears at 37–39 (RGD).

Post-translationally, the N-terminus is blocked. In terms of tissue distribution, expressed in salivary glands.

It is found in the cytoplasmic vesicle. The protein localises to the secretory vesicle. The protein resides in the secreted. Functionally, tick salivary platelet aggregation inhibitor that plays an important part in the anti-hemostatic strategy of ticks. Inhibits platelet aggregation induced by ADP (IC(50)~150 nM), collagen, and platelet activating factor (PAF). Acts by binding to platelet membrane glycoprotein IIb-IIIa (ITGA2B/ITGB3) in a metal ion dependent manner. Does not inhibit aggregation induced by ristocecin, an agonist that aggregates platelets independently from the glycoprotein IIb-IIIa (ITGA2B/ITGB3). In contrast to other tick platelet aggregation inhibitors, this protein does not protect ITGA2B/ITGB3 from dissociation under SDS condition, suggesting it may dissocate much faster than its orthologs. This Argas monolakensis (Mono lake bird tick) protein is Monogrin 2.